The sequence spans 315 residues: Probable serine acetyltransferase 4 (315 aa).

Residues 287 to 315 (AKPIIGKKAAPQRRPEELPGVTMEQRWSD) are disordered.

Belongs to the transferase hexapeptide repeat family. Homomultimer.

It catalyses the reaction L-serine + acetyl-CoA = O-acetyl-L-serine + CoA. It participates in amino-acid biosynthesis; L-cysteine biosynthesis; L-cysteine from L-serine: step 1/2. In Oryza sativa subsp. japonica (Rice), this protein is Probable serine acetyltransferase 4 (SAT4).